Reading from the N-terminus, the 182-residue chain is uncharacterized protein (182 aa).

Residues 1 to 29 (MKKLLKKLVVLFLSSLVIIFNVWYFIICA) form the signal peptide. A helical transmembrane segment spans residues 152–174 (WNLYFWTAASYNAVIFVFVLVIV).

It localises to the membrane. This is an uncharacterized protein from Bacillus subtilis (strain 168).